The following is a 131-amino-acid chain: Lactose permease (131 aa).

Over 1 to 13 (MKFSELAPRERHN) the chain is Cytoplasmic. Residues 14–34 (FVYFLLFFFFYHFIMSAYFPF) form a helical membrane-spanning segment. At 35-50 (FPVWLADVNHLTKTET) the chain is on the periplasmic side. The helical transmembrane segment at 51 to 71 (GIVFSSISLFAIIFQPVFGLM) threads the bilayer. Over 72–80 (SDKLGLRKH) the chain is Cytoplasmic. A helical transmembrane segment spans residues 81–101 (LLWTITVLLILFAPFFIFVFS). Proline 102 is a topological domain (periplasmic). A helical membrane pass occupies residues 103 to 123 (LLQMNIIAGSLVGGIYLGIVF). At 124–131 (STAPGVGS) the chain is on the cytoplasmic side.

The protein belongs to the major facilitator superfamily. Oligosaccharide:H(+) symporter (OHS) (TC 2.A.1.5) family.

The protein localises to the cell inner membrane. The catalysed reaction is lactose(in) + H(+)(in) = lactose(out) + H(+)(out). In terms of biological role, responsible for transport of beta-galactosides into the cell, with the concomitant import of a proton (symport system). This chain is Lactose permease (lacY), found in Klebsiella pneumoniae.